Here is a 440-residue protein sequence, read N- to C-terminus: Replication factor C large subunit (440 aa).

48–55 contributes to the ATP binding site; the sequence is GPPGVGKT.

Belongs to the activator 1 small subunits family. RfcL subfamily. In terms of assembly, heteromultimer composed of small subunits (RfcS) and large subunits (RfcL).

Part of the RFC clamp loader complex which loads the PCNA sliding clamp onto DNA. The protein is Replication factor C large subunit of Sulfurisphaera tokodaii (strain DSM 16993 / JCM 10545 / NBRC 100140 / 7) (Sulfolobus tokodaii).